The following is a 446-amino-acid chain: Protein adenylyltransferase FICD (446 aa).

The Cytoplasmic segment spans residues 1–18 (MAVTECEWASLGSRIGLR). A helical; Signal-anchor for type II membrane protein membrane pass occupies residues 19–39 (AALVLLSGSLLVVLFPLSGLE). Topologically, residues 40-446 (HQYRTALNIL…ECKQTITIKT (407 aa)) are lumenal. TPR repeat units lie at residues 94–127 (AKAALNQALEMKRQGKKEKAHKLLHHALKMDPDH) and 128–161 (VDALNELGILLEEEKDIIQADYLYSKALTISPHN). The Inhibitory (S/T)XXXE(G/N) motif signature appears at 218 to 223 (TVAIEG). Glu-222 provides a ligand contact to ATP. Asn-263 is a glycosylation site (N-linked (GlcNAc...) asparagine). Residues 273–408 (VTIDNILEIH…VRPFIRFIAK (136 aa)) form the Fido domain. Residue 304–307 (VGHH) coordinates ATP. His-351 is an active-site residue. Residues 355-362 (DGNGRTSR), 387-388 (YY), and Asn-395 each bind ATP.

This sequence belongs to the fic family. Homodimer. The cofactor is Mg(2+). Mn(2+) serves as cofactor.

The protein localises to the endoplasmic reticulum membrane. The catalysed reaction is L-tyrosyl-[protein] + ATP = O-(5'-adenylyl)-L-tyrosyl-[protein] + diphosphate. It catalyses the reaction 3-O-(5'-adenylyl)-L-threonyl-[protein] + H2O = L-threonyl-[protein] + AMP + H(+). The enzyme catalyses L-threonyl-[protein] + ATP = 3-O-(5'-adenylyl)-L-threonyl-[protein] + diphosphate. The side chain of Glu-222 determines which of the two opposing activities (AMPylase or de-AMPylase) will take place. In response to endoplasmic reticulum stress, mediates de-AMPylase activity. Adenylyltransferase activity is inhibited by the inhibitory helix present at the N-terminus: Glu-222 binds ATP and competes with ATP-binding at Arg-362, thereby preventing adenylyltransferase activity. In unstressed cells, disengagement of Glu-222 promotes adenylyltransferase activity. Activation dissociates ATP-binding from Glu-222, allowing ordered binding of the entire ATP moiety with the alpha-phosphate in an orientation that is productive for accepting an incoming target hydroxyl side chain. In terms of biological role, protein that can both mediate the addition of adenosine 5'-monophosphate (AMP) to specific residues of target proteins (AMPylation), and the removal of the same modification from target proteins (de-AMPylation), depending on the context. The side chain of Glu-222 determines which of the two opposing activities (AMPylase or de-AMPylase) will take place. Acts as a key regulator of the ERN1/IRE1-mediated unfolded protein response (UPR) by mediating AMPylation or de-AMPylation of HSPA5/BiP. In unstressed cells, acts as an adenylyltransferase by mediating AMPylation of HSPA5/BiP at 'Thr-518', thereby inactivating it. In response to endoplasmic reticulum stress, acts as a phosphodiesterase by mediating removal of ATP (de-AMPylation) from HSPA5/BiP at 'Thr-518', leading to restore HSPA5/BiP activity. This is Protein adenylyltransferase FICD from Xenopus tropicalis (Western clawed frog).